A 95-amino-acid polypeptide reads, in one-letter code: Bombyxin C-2 (95 aa).

The first 19 residues, 1-19 (MKLVILLVVVSAMLVLGGA), serve as a signal peptide directing secretion. A Pyrrolidone carboxylic acid modification is found at Gln20. Disulfide bonds link Cys27–Cys76, Cys39–Cys89, and Cys75–Cys80. A propeptide spans 47–67 (SGSQYAGYGWPWLPPFSSSRG) (c peptide like).

It belongs to the insulin family. In terms of assembly, heterodimer of a B chain and an A chain linked by two disulfide bonds.

The protein localises to the secreted. In terms of biological role, brain peptide responsible for activation of prothoracic glands to produce ecdysone in insects. This chain is Bombyxin C-2 (BBXC2), found in Bombyx mori (Silk moth).